We begin with the raw amino-acid sequence, 254 residues long: Flavin-dependent thymidylate synthase (254 aa).

Residues 7–237 (LRVQLIARTE…PAVFADFEIY (231 aa)) form the ThyX domain. FAD is bound by residues Ser71, 95–97 (RHR), and Gln103. DUMP-binding positions include 92–95 (ELIR), 103–107 (QLSQR), and Arg176. The ThyX motif motif lies at 95-105 (RHRHFSYSQLS). FAD contacts are provided by residues 192–194 (NYR) and His198. Arg203 is a dUMP binding site. The active-site Involved in ionization of N3 of dUMP, leading to its activation is Arg203.

The protein belongs to the thymidylate synthase ThyX family. In terms of assembly, homotetramer. FAD serves as cofactor.

It catalyses the reaction dUMP + (6R)-5,10-methylene-5,6,7,8-tetrahydrofolate + NADPH + H(+) = dTMP + (6S)-5,6,7,8-tetrahydrofolate + NADP(+). It functions in the pathway pyrimidine metabolism; dTTP biosynthesis. Catalyzes the reductive methylation of 2'-deoxyuridine-5'-monophosphate (dUMP) to 2'-deoxythymidine-5'-monophosphate (dTMP) while utilizing 5,10-methylenetetrahydrofolate (mTHF) as the methyl donor, and NADPH and FADH(2) as the reductant. This chain is Flavin-dependent thymidylate synthase, found in Mycobacterium sp. (strain JLS).